Here is a 397-residue protein sequence, read N- to C-terminus: Probable sugar efflux transporter (397 aa).

Helical transmembrane passes span 15-35 (VVTL…PVGL), 51-71 (GIML…FMLL), 81-101 (LICL…AWSF), 103-123 (VLVI…SITA), 136-156 (AQAL…GLPV), 170-190 (FLAI…LLPL), 209-229 (PALM…YTAY), 246-266 (FATV…VIFG), 273-293 (ASVL…LLMP), 301-321 (LAIL…GMQV), 333-353 (VAMS…ALVG), and 364-384 (DIGY…VIIF).

Belongs to the major facilitator superfamily. SotB (TC 2.A.1.2) family.

It is found in the cell inner membrane. Involved in the efflux of sugars. The physiological role may be the reduction of the intracellular concentration of toxic sugars or sugar metabolites. This chain is Probable sugar efflux transporter, found in Escherichia fergusonii (strain ATCC 35469 / DSM 13698 / CCUG 18766 / IAM 14443 / JCM 21226 / LMG 7866 / NBRC 102419 / NCTC 12128 / CDC 0568-73).